The primary structure comprises 872 residues: Protein translocase subunit SecA (872 aa).

ATP is bound by residues Gln87, 105 to 109 (GEGKT), and Asp510. Zn(2+)-binding residues include Cys847, Cys849, Cys858, and Cys859.

Belongs to the SecA family. Monomer and homodimer. Part of the essential Sec protein translocation apparatus which comprises SecA, SecYEG and auxiliary proteins SecDF-YajC and YidC. Zn(2+) serves as cofactor.

The protein localises to the cell inner membrane. Its subcellular location is the cytoplasm. It carries out the reaction ATP + H2O + cellular proteinSide 1 = ADP + phosphate + cellular proteinSide 2.. Part of the Sec protein translocase complex. Interacts with the SecYEG preprotein conducting channel. Has a central role in coupling the hydrolysis of ATP to the transfer of proteins into and across the cell membrane, serving as an ATP-driven molecular motor driving the stepwise translocation of polypeptide chains across the membrane. This chain is Protein translocase subunit SecA, found in Aliarcobacter butzleri (strain RM4018) (Arcobacter butzleri).